The primary structure comprises 345 residues: UDP-3-O-acylglucosamine N-acyltransferase (345 aa).

His-248 (proton acceptor) is an active-site residue.

It belongs to the transferase hexapeptide repeat family. LpxD subfamily. In terms of assembly, homotrimer.

The enzyme catalyses a UDP-3-O-[(3R)-3-hydroxyacyl]-alpha-D-glucosamine + a (3R)-hydroxyacyl-[ACP] = a UDP-2-N,3-O-bis[(3R)-3-hydroxyacyl]-alpha-D-glucosamine + holo-[ACP] + H(+). The protein operates within bacterial outer membrane biogenesis; LPS lipid A biosynthesis. Functionally, catalyzes the N-acylation of UDP-3-O-acylglucosamine using 3-hydroxyacyl-ACP as the acyl donor. Is involved in the biosynthesis of lipid A, a phosphorylated glycolipid that anchors the lipopolysaccharide to the outer membrane of the cell. The protein is UDP-3-O-acylglucosamine N-acyltransferase of Prochlorococcus marinus (strain SARG / CCMP1375 / SS120).